A 720-amino-acid polypeptide reads, in one-letter code: MAALSEHFTLCGLLTGTDDGKSEILGVEPAGEPDRVLVTDSVQAVTLYKVSDQKPQGAWAVKQGQSITCPAVLNPESGEFIVVHDDKVLRIWKEDNVNLDIAFKATLSADVCRIHTLPNTDPLVLFKGGAVHFLDSLLTDPQQKIGTVLSDGERIVWSEIFADDGQPLIVYLTQQFSNYFVYIHKFSPVCVCKYHLKPNTEDSTILDCSGSVKSKIFTLLTLYSSGQVCQTPFPVSLINKETERVVSASPLLQLSGPIEVGALNFLDESHVAVLISSSSEQKECLSIWNTTFQTLQAARNFQQRTSAQLWCYDNKLFVPHGKTLVVVPYVCEASCLASVLGKSRNIQTSVLENVPFVNWDKLVGKDPETKPSNAGAQKKTRERKTNANAGNGTESILYPFDVQNISQTQTEAFVQQLLLGKEDTDFQITVGKITQGLVKRCMADPKFYPQSSFVQLVQTNTLSYSLCPDLLSLFLEKRDVPLLQLCLHSFPDVPEVILCSCLKAFLSISEKLVNAAQINTELASLYIDVGDKDKEHKYTEHPEEPSVLQNGFSPTALEEDSCDELIAESLPQTTQKATCPISIKRAVLVNSILISPYNESFLLPHLKDMSGDQVMFFLRYLLYLYLKFNENITINHPGKQMPTVSQIVDWMSMLLDAHFATVVMLSDAKALLNKIQKTVKSQLKFYSEMNKIEGCLAELKELKCPARVSARYSIEVLQLY.

The tract at residues 365-392 (KDPETKPSNAGAQKKTRERKTNANAGNG) is disordered.

The protein resides in the nucleus. Its subcellular location is the nucleolus. Functionally, ribosome biogenesis factor. May be required for both optimal rDNA transcription and pre-rRNA processing. The protein is Nucleolar protein 11 (nol11) of Xenopus laevis (African clawed frog).